We begin with the raw amino-acid sequence, 146 residues long: Phage-like element PBSX protein XkdJ (146 aa).

It to B.subtilis YqbJ.

The sequence is that of Phage-like element PBSX protein XkdJ (xkdJ) from Bacillus subtilis (strain 168).